The sequence spans 972 residues: Hemoglobin and hemoglobin-haptoglobin-binding protein (972 aa).

Positions 1 to 22 (MKANKLSAITLCILGYAHTVYA) are cleaved as a signal peptide. The TonB box signature appears at 32-39 (ETIVVSSE). Residues 38–167 (SEDDSVHNKN…LGGTVSFESK (130 aa)) enclose the TBDR plug domain. Residues 175–972 (DKNYHFGYKT…NFRVNAEITF (798 aa)) enclose the TBDR beta-barrel domain. Positions 955-972 (KRFNAPGRNFRVNAEITF) match the TonB C-terminal box motif.

This sequence belongs to the TonB-dependent receptor family. Hemoglobin/haptoglobin binding protein subfamily.

It is found in the cell outer membrane. Acts as a receptor for hemoglobin or the hemoglobin/haptoglobin complex of the host and is required for heme uptake. May be involved in virulence. This Haemophilus ducreyi (strain 35000HP / ATCC 700724) protein is Hemoglobin and hemoglobin-haptoglobin-binding protein.